Consider the following 345-residue polypeptide: Beta-2-glycoprotein 1 (345 aa).

Residues 1-19 form the signal peptide; sequence MISLGLILFSSVLCHVATA. 4 Sushi domains span residues 21 to 81, 82 to 139, 140 to 202, and 203 to 262; these read RTCP…RCIP, RVCP…VCTR, VTCP…ECRE, and VKCP…SCKA. Intrachain disulfides connect C23–C66, C51–C79, C84–C124, C110–C137, C142–C188, C174–C200, C205–C248, C234–C260, C264–C315, C300–C325, and C307–C345. Residue T33 is glycosylated (O-linked (GalNAc...) threonine). N-linked (GlcNAc...) asparagine glycosylation is found at N117, N162, N183, and N193. The N-linked (GlcNAc...) asparagine glycan is linked to N253. The interval 263 to 345 is sushi-like; sequence SCKLSVKKAT…KTDASDVKPC (83 aa).

As to expression, expressed by the liver and secreted in plasma.

The protein resides in the secreted. Functionally, binds to various kinds of negatively charged substances such as heparin, phospholipids, and dextran sulfate. May prevent activation of the intrinsic blood coagulation cascade by binding to phospholipids on the surface of damaged cells. This Canis lupus familiaris (Dog) protein is Beta-2-glycoprotein 1 (APOH).